The sequence spans 253 residues: Acidic 26 kDa endochitinase (253 aa).

Positions 1–24 (MKFNIVSPVALSCLFFLFLTGTLA) are cleaved as a signal peptide. Glutamate 92 serves as the catalytic Proton donor. The cysteines at positions 212 and 244 are disulfide-linked.

The protein belongs to the glycosyl hydrolase 19 family. Chitinase class II subfamily.

The protein resides in the secreted. Its subcellular location is the extracellular space. It catalyses the reaction Random endo-hydrolysis of N-acetyl-beta-D-glucosaminide (1-&gt;4)-beta-linkages in chitin and chitodextrins.. In terms of biological role, defense against chitin-containing fungal pathogens. In Solanum lycopersicum (Tomato), this protein is Acidic 26 kDa endochitinase (CHI3).